A 148-amino-acid polypeptide reads, in one-letter code: Ribonuclease H (148 aa).

In terms of domain architecture, RNase H type-1 spans 1 to 142 (MSDSVEIYTD…ADQLANRGVD (142 aa)). Mg(2+)-binding residues include Asp-10, Glu-48, Asp-70, and Asp-134. The tract at residues 129–148 (GNERADQLANRGVDEVRAQR) is disordered.

Belongs to the RNase H family. In terms of assembly, monomer. Requires Mg(2+) as cofactor.

The protein resides in the cytoplasm. It carries out the reaction Endonucleolytic cleavage to 5'-phosphomonoester.. Its function is as follows. Endonuclease that specifically degrades the RNA of RNA-DNA hybrids. The protein is Ribonuclease H of Pseudomonas entomophila (strain L48).